The sequence spans 902 residues: Protein NrfI (902 aa).

The next 10 membrane-spanning stretches (helical) occupy residues 9-29 (YITL…ATFI), 75-95 (FLFH…RYLG), 300-320 (VTYL…LDPT), 335-355 (LSLL…YAQS), 602-622 (LVLG…PPLA), 659-679 (DTYE…LLFF), 731-751 (SYGF…LFIL), 772-792 (VSLI…GIWA), 832-852 (YLFS…YFGV), and 868-888 (LPIP…SLIA).

The protein in the C-terminal section; belongs to the CcmF/CycK/Ccl1/NrfE/CcsA family.

It localises to the cell membrane. Functionally, may play a role in cytochrome c biogenesis and may be required for maturation of the NrfA protein. This Wolinella succinogenes (strain ATCC 29543 / DSM 1740 / CCUG 13145 / JCM 31913 / LMG 7466 / NCTC 11488 / FDC 602W) (Vibrio succinogenes) protein is Protein NrfI (nrfI).